Reading from the N-terminus, the 145-residue chain is MPKYYCDYCDTYLTHDSPSVRKTHCTGRKHRDNVKFYYQKWMEEQAQHLIDATTAAFKAGKITNNPFAGGPGGAPPKPAGVSIPPPNMGAPPRPGMPGMPYMPPLMNPMMGMRPPPIMNPMAMMGPPPPLGTIPGVRPGIMNGPK.

The Matrin-type zinc-finger motif lies at 4 to 36; that stretch reads YYCDYCDTYLTHDSPSVRKTHCTGRKHRDNVKF. The segment at 67–91 is disordered; that stretch reads FAGGPGGAPPKPAGVSIPPPNMGAP. Positions 73 to 91 are enriched in pro residues; it reads GAPPKPAGVSIPPPNMGAP.

It belongs to the U1 small nuclear ribonucleoprotein C family. U1 snRNP is composed of the 7 core Sm proteins B/B', D1, D2, D3, E, F and G that assemble in a heptameric protein ring on the Sm site of the small nuclear RNA to form the core snRNP, and at least 3 U1 snRNP-specific proteins U1-70K, U1-A and U1-C. U1-C interacts with U1 snRNA and the 5' splice-site region of the pre-mRNA.

The protein resides in the nucleus. Functionally, component of the spliceosomal U1 snRNP, which is essential for recognition of the pre-mRNA 5' splice-site and the subsequent assembly of the spliceosome. U1-C is directly involved in initial 5' splice-site recognition for both constitutive and regulated alternative splicing. The interaction with the 5' splice-site seems to precede base-pairing between the pre-mRNA and the U1 snRNA. Stimulates commitment or early (E) complex formation by stabilizing the base pairing of the 5' end of the U1 snRNA and the 5' splice-site region. Regulates alternative splicing of a distinct group of target genes. The polypeptide is U1 small nuclear ribonucleoprotein C (Drosophila melanogaster (Fruit fly)).